The sequence spans 142 residues: Large ribosomal subunit protein uL11 (142 aa).

This sequence belongs to the universal ribosomal protein uL11 family. In terms of assembly, part of the ribosomal stalk of the 50S ribosomal subunit. Interacts with L10 and the large rRNA to form the base of the stalk. L10 forms an elongated spine to which L12 dimers bind in a sequential fashion forming a multimeric L10(L12)X complex. In terms of processing, one or more lysine residues are methylated.

In terms of biological role, forms part of the ribosomal stalk which helps the ribosome interact with GTP-bound translation factors. This Shewanella baltica (strain OS223) protein is Large ribosomal subunit protein uL11.